The sequence spans 67 residues: Photosystem II reaction center protein H (67 aa).

The chain crosses the membrane as a helical span at residues 27–47 (GAVPVMAFIGVLLLVFLVILL).

It belongs to the PsbH family. PSII is composed of 1 copy each of membrane proteins PsbA, PsbB, PsbC, PsbD, PsbE, PsbF, PsbH, PsbI, PsbJ, PsbK, PsbL, PsbM, PsbT, PsbX, PsbY, Psb30/Ycf12, peripheral proteins PsbO, CyanoQ (PsbQ), PsbU, PsbV and a large number of cofactors. It forms dimeric complexes.

It localises to the cellular thylakoid membrane. One of the components of the core complex of photosystem II (PSII), required for its stability and/or assembly. PSII is a light-driven water:plastoquinone oxidoreductase that uses light energy to abstract electrons from H(2)O, generating O(2) and a proton gradient subsequently used for ATP formation. It consists of a core antenna complex that captures photons, and an electron transfer chain that converts photonic excitation into a charge separation. The chain is Photosystem II reaction center protein H from Prochlorococcus marinus (strain MIT 9211).